A 142-amino-acid chain; its full sequence is Putative regulator of rDNA transcription protein 16 (142 aa).

Transmembrane regions (helical) follow at residues 19-39 (ILLT…VMVA), 84-104 (FLLF…AIFL), and 111-131 (SIFI…GLCH).

Its subcellular location is the membrane. Functionally, identified in a screen for mutants with decreased levels of rDNA transcription. This is Putative regulator of rDNA transcription protein 16 (RRT16) from Saccharomyces cerevisiae (strain ATCC 204508 / S288c) (Baker's yeast).